Reading from the N-terminus, the 644-residue chain is Zinc finger protein 568 (644 aa).

A KRAB domain is found at 48-119; sequence VTFKDVAVDL…EEEMFGRHCP (72 aa). 15 consecutive C2H2-type zinc fingers follow at residues 222 to 244, 250 to 272, 278 to 300, 306 to 328, 334 to 356, 362 to 384, 390 to 412, 418 to 440, 446 to 468, 474 to 496, 502 to 524, 530 to 552, 558 to 580, 586 to 608, and 614 to 636; these read FKCN…ERIH, YECK…QKIH, YKCN…HRIH, YACK…ERIH, YECK…EKIH, YACN…MRSH, YKCN…MRSH, YVCS…MRNH, YECS…QRIH, YACT…EKIH, YHCN…EKIH, FKCN…VRSH, YECN…MRSH, and FECN…KRGH.

The protein belongs to the krueppel C2H2-type zinc-finger protein family. In terms of assembly, interacts with TRIM28.

It localises to the nucleus. In terms of biological role, has transcriptional repression activity, partially through the recruitment of the corepressor TRIM28 but also has repression activity independently of this interaction. Essential during embryonic development, where it acts as a direct repressor of a placental-specific transcript of IGF2 in early development and regulates convergent extension movements required for axis elongation and tissue morphogenesis in all germ layers. Also important for normal morphogenesis of extraembryonic tissues including the yolk sac, extraembryonic mesoderm and placenta. May enhance proliferation or maintenance of neural stem cells. This chain is Zinc finger protein 568 (ZNF568), found in Homo sapiens (Human).